We begin with the raw amino-acid sequence, 396 residues long: NADH-quinone oxidoreductase subunit D (396 aa).

Belongs to the complex I 49 kDa subunit family. In terms of assembly, NDH-1 is composed of 14 different subunits. Subunits NuoB, C, D, E, F, and G constitute the peripheral sector of the complex.

The protein localises to the cell inner membrane. It catalyses the reaction a quinone + NADH + 5 H(+)(in) = a quinol + NAD(+) + 4 H(+)(out). Its function is as follows. NDH-1 shuttles electrons from NADH, via FMN and iron-sulfur (Fe-S) centers, to quinones in the respiratory chain. The immediate electron acceptor for the enzyme in this species is believed to be ubiquinone. Couples the redox reaction to proton translocation (for every two electrons transferred, four hydrogen ions are translocated across the cytoplasmic membrane), and thus conserves the redox energy in a proton gradient. The chain is NADH-quinone oxidoreductase subunit D from Methylorubrum populi (strain ATCC BAA-705 / NCIMB 13946 / BJ001) (Methylobacterium populi).